The chain runs to 176 residues: ATP-dependent protease subunit HslV (176 aa).

Residue Thr-5 is part of the active site. Residues Ser-161, Cys-164, and Thr-167 each coordinate Na(+).

The protein belongs to the peptidase T1B family. HslV subfamily. As to quaternary structure, a double ring-shaped homohexamer of HslV is capped on each side by a ring-shaped HslU homohexamer. The assembly of the HslU/HslV complex is dependent on binding of ATP.

The protein localises to the cytoplasm. It catalyses the reaction ATP-dependent cleavage of peptide bonds with broad specificity.. Allosterically activated by HslU binding. In terms of biological role, protease subunit of a proteasome-like degradation complex believed to be a general protein degrading machinery. The chain is ATP-dependent protease subunit HslV from Thermoanaerobacter sp. (strain X514).